Reading from the N-terminus, the 445-residue chain is Phosphoglucosamine mutase (445 aa).

Serine 102 functions as the Phosphoserine intermediate in the catalytic mechanism. Positions 102, 241, 243, and 245 each coordinate Mg(2+). Serine 102 is subject to Phosphoserine.

Belongs to the phosphohexose mutase family. Mg(2+) serves as cofactor. Post-translationally, activated by phosphorylation.

It catalyses the reaction alpha-D-glucosamine 1-phosphate = D-glucosamine 6-phosphate. Its function is as follows. Catalyzes the conversion of glucosamine-6-phosphate to glucosamine-1-phosphate. The chain is Phosphoglucosamine mutase from Enterobacter sp. (strain 638).